The primary structure comprises 489 residues: MTTTEQRLTVESRNGIDYKVADLSLAEFGRKEIRLAEHEMPGLMALRREYAEVAPLKGARISGSLHMTVQTAVLIETLVSLGAEVRWASCNIFSTQDHAAAAVVVGPHGTPEEPKGTPVFAWKGETLEEYWWAAEQMLTWPGEPANMILDDGGDATMLVLRGAQFEKAGVVPPAEDDDSAEYKVFLNLLRERFETDKTKWTKIAESVKGVTEETTTGVLRLYQFEAAGELPFPAINVNDSVTKSKFDNKYGTRHSLIDGINRGTDVLIGGKKVLICGYGDVGKGCAESLAGQGARVQVTEIDPINALQALMDGFDVVTVEQAIGSADIVITSTGNKDIITLDHMKAMKDKAILGNIGHFDNEIDMAALERSGATRINIKPQVDEWTFDDGHSIVVLSEGRLLNLGNATGHPSFVMSNSFSNQVIAQIELWTKNDEYDNAVYRLAKHLDEKVARIHVEALGGTLTKLTKEQAEYINVDVEGPYKPEHYRY.

Residues T68, D151, and E213 each contribute to the substrate site. Residue 214 to 216 (TTT) coordinates NAD(+). Residues K243 and D247 each coordinate substrate. NAD(+) contacts are provided by residues N248, 277 to 282 (GYGDVG), E300, N335, 356 to 358 (IGH), and N403.

This sequence belongs to the adenosylhomocysteinase family. It depends on NAD(+) as a cofactor.

Its subcellular location is the cytoplasm. It catalyses the reaction S-adenosyl-L-homocysteine + H2O = L-homocysteine + adenosine. It participates in amino-acid biosynthesis; L-homocysteine biosynthesis; L-homocysteine from S-adenosyl-L-homocysteine: step 1/1. Its function is as follows. May play a key role in the regulation of the intracellular concentration of adenosylhomocysteine. The chain is Adenosylhomocysteinase from Mycobacterium sp. (strain JLS).